The sequence spans 89 residues: Small ribosomal subunit protein uS14 (89 aa).

This sequence belongs to the universal ribosomal protein uS14 family. As to quaternary structure, part of the 30S ribosomal subunit. Contacts proteins S3 and S10.

In terms of biological role, binds 16S rRNA, required for the assembly of 30S particles and may also be responsible for determining the conformation of the 16S rRNA at the A site. This chain is Small ribosomal subunit protein uS14, found in Chlorobium chlorochromatii (strain CaD3).